The primary structure comprises 148 residues: Deoxyuridine 5'-triphosphate nucleotidohydrolase (148 aa).

Residues 67 to 69, asparagine 80, 84 to 86, and lysine 94 contribute to the substrate site; these read RSG and TID.

The protein belongs to the dUTPase family. Mg(2+) is required as a cofactor.

It catalyses the reaction dUTP + H2O = dUMP + diphosphate + H(+). Its pathway is pyrimidine metabolism; dUMP biosynthesis; dUMP from dCTP (dUTP route): step 2/2. Functionally, this enzyme is involved in nucleotide metabolism: it produces dUMP, the immediate precursor of thymidine nucleotides and it decreases the intracellular concentration of dUTP so that uracil cannot be incorporated into DNA. In Orientia tsutsugamushi (strain Boryong) (Rickettsia tsutsugamushi), this protein is Deoxyuridine 5'-triphosphate nucleotidohydrolase.